Reading from the N-terminus, the 41-residue chain is Omega-theraphotoxin-Hg1a (41 aa).

Disulfide bonds link C7/C21, C14/C26, and C20/C33.

It belongs to the neurotoxin 10 (Hwtx-1) family. 56 (SNX-482) subfamily. Expressed by the venom gland.

Its subcellular location is the secreted. Its function is as follows. Toxin that blocks vertebrate P/Q-type (Cav2.1/CACNA1A) and R-type (Cav2.3/CACNA1E) voltage-gated calcium channels. Also inhibits sodium channels (Nav) in bovine chromaffin cells by delaying sodium channel inactivation. This chain is Omega-theraphotoxin-Hg1a, found in Hysterocrates gigas (Cameroon red baboon tarantula).